The sequence spans 610 residues: Elongation factor 4 (610 aa).

The 183-residue stretch at 11–193 folds into the tr-type G domain; sequence EKIRNFSIIA…QIVEKVPAPT (183 aa). Residues 23-28 and 140-143 contribute to the GTP site; these read DHGKST and NKID.

Belongs to the TRAFAC class translation factor GTPase superfamily. Classic translation factor GTPase family. LepA subfamily.

It is found in the cell membrane. It carries out the reaction GTP + H2O = GDP + phosphate + H(+). In terms of biological role, required for accurate and efficient protein synthesis under certain stress conditions. May act as a fidelity factor of the translation reaction, by catalyzing a one-codon backward translocation of tRNAs on improperly translocated ribosomes. Back-translocation proceeds from a post-translocation (POST) complex to a pre-translocation (PRE) complex, thus giving elongation factor G a second chance to translocate the tRNAs correctly. Binds to ribosomes in a GTP-dependent manner. The chain is Elongation factor 4 from Streptococcus pyogenes serotype M12 (strain MGAS9429).